A 203-amino-acid chain; its full sequence is Formate hydrogenlyase subunit 2 (203 aa).

4 consecutive 4Fe-4S ferredoxin-type domains span residues Asn2–Gln32, Asn42–Asp72, Gly73–Ser102, and Arg137–Asn169. The [4Fe-4S] cluster site is built by Cys12, Cys15, Cys18, Cys22, Cys51, Cys54, Cys59, Cys63, Cys82, Cys85, Cys88, Cys92, Cys143, Cys146, Cys155, and Cys159.

FHL comprises of a formate dehydrogenase, unidentified electron carriers and a hydrogenase (isoenzyme 3). In this non-energy conserving pathway, molecular hydrogen and carbodioxide are released from formate. It depends on [4Fe-4S] cluster as a cofactor.

Probable electron transfer protein for hydrogenase 3. The polypeptide is Formate hydrogenlyase subunit 2 (hycB) (Escherichia coli (strain K12)).